We begin with the raw amino-acid sequence, 386 residues long: O-methyltransferase 10 (386 aa).

S-adenosyl-L-homocysteine is bound by residues S207, G231, D254, D274, and K288. D254 contributes to the S-adenosyl-L-methionine binding site. The active-site Proton acceptor is H292.

This sequence belongs to the class I-like SAM-binding methyltransferase superfamily. Cation-independent O-methyltransferase family. Homodimer.

It carries out the reaction dopamine + S-adenosyl-L-methionine = 4-methoxytyramine + S-adenosyl-L-homocysteine + H(+). It catalyses the reaction 3,4-dihydroxy-5-methoxyphenethylamine + S-adenosyl-L-methionine = 3-hydroxy-4,5-dimethoxyphenethylamine + S-adenosyl-L-homocysteine + H(+). The enzyme catalyses 3-hydroxy-4,5-dimethoxyphenethylamine + S-adenosyl-L-methionine = mescaline + S-adenosyl-L-homocysteine + H(+). The catalysed reaction is 4-hydroxy-3,5-dimethoxyphenethylamine + S-adenosyl-L-methionine = mescaline + S-adenosyl-L-homocysteine + H(+). Its pathway is aromatic compound metabolism. It participates in alkaloid biosynthesis. Functionally, O-methyltransferase participating in the biosynthesis of natural products derived from phenylethylamine, including mescaline, a natural hallucinogen potentially used in psychotherapeutic treatments. Catalyzes the O-methylation of mescaline para hydroxyl groups, using dopamine, 3,4-dihydroxy-5-methoxyphenethylamine, 3-hydroxy-4,5-dimethoxyphenethylamine and 4-hydroxy-3,5-dimethoxyphenethylamine as substrates. In Lophophora williamsii (Peyote), this protein is O-methyltransferase 10.